Consider the following 185-residue polypeptide: Ribosome-recycling factor (185 aa).

The protein belongs to the RRF family.

It localises to the cytoplasm. In terms of biological role, responsible for the release of ribosomes from messenger RNA at the termination of protein biosynthesis. May increase the efficiency of translation by recycling ribosomes from one round of translation to another. This is Ribosome-recycling factor from Methylobacillus flagellatus (strain ATCC 51484 / DSM 6875 / VKM B-1610 / KT).